The chain runs to 596 residues: Jacalin-related lectin 46 (596 aa).

The interval 1-20 is disordered; sequence MTERSEALGKDGNRRWDDKS. 4 Jacalin-type lectin domains span residues 2–143, 146–291, 294–439, and 446–592; these read TERS…YFTR, PTRI…YFTP, PTKS…HFYP, and AEKL…HVLP.

It belongs to the jacalin lectin family.

The polypeptide is Jacalin-related lectin 46 (JAL46) (Arabidopsis thaliana (Mouse-ear cress)).